The sequence spans 180 residues: Putative 5'(3')-deoxyribonucleotidase (180 aa).

The active-site Nucleophile is D9. D9, D11, and D135 together coordinate Mg(2+). The active-site Proton donor is the D11.

The protein belongs to the 5'(3')-deoxyribonucleotidase family. Mg(2+) serves as cofactor.

Dephosphorylates the 5' and 2'(3')-phosphates of deoxyribonucleotides. This Staphylococcus aureus (strain Mu50 / ATCC 700699) protein is Putative 5'(3')-deoxyribonucleotidase.